The chain runs to 95 residues: Small ribosomal subunit protein uS19 (95 aa).

Belongs to the universal ribosomal protein uS19 family.

Functionally, protein S19 forms a complex with S13 that binds strongly to the 16S ribosomal RNA. This Coxiella burnetii (strain CbuK_Q154) (Coxiella burnetii (strain Q154)) protein is Small ribosomal subunit protein uS19.